The primary structure comprises 702 residues: Pseudouridylate synthase PUS7L (702 aa).

Ser79 bears the Phosphoserine mark. Positions 84 to 116 (NSEGAADLPGCSDGDRSHQSDSEKENSVNSVTS) are disordered. A compositionally biased stretch (basic and acidic residues) spans 96–109 (DGDRSHQSDSEKEN). The active-site Nucleophile is Asp339. In terms of domain architecture, TRUD spans 424 to 646 (GFVNYYGPQR…PGCYRHIVKH (223 aa)).

It belongs to the pseudouridine synthase TruD family.

The enzyme catalyses a uridine in mRNA = a pseudouridine in mRNA. Pseudouridine synthase that catalyzes pseudouridylation of mRNAs. The polypeptide is Pseudouridylate synthase PUS7L (Mus musculus (Mouse)).